The chain runs to 120 residues: Large ribosomal subunit protein uL18 (120 aa).

It belongs to the universal ribosomal protein uL18 family. As to quaternary structure, part of the 50S ribosomal subunit; part of the 5S rRNA/L5/L18/L25 subcomplex. Contacts the 5S and 23S rRNAs.

This is one of the proteins that bind and probably mediate the attachment of the 5S RNA into the large ribosomal subunit, where it forms part of the central protuberance. This chain is Large ribosomal subunit protein uL18, found in Rhodopseudomonas palustris (strain BisB5).